The primary structure comprises 37 residues: Large ribosomal subunit protein bL36 (37 aa).

It belongs to the bacterial ribosomal protein bL36 family.

The sequence is that of Large ribosomal subunit protein bL36 from Trichodesmium erythraeum (strain IMS101).